Here is a 458-residue protein sequence, read N- to C-terminus: UDP-N-acetylglucosamine 1-carboxyvinyltransferase (458 aa).

34–35 provides a ligand contact to phosphoenolpyruvate; that stretch reads KN. Arg-104 is a binding site for UDP-N-acetyl-alpha-D-glucosamine. The Proton donor role is filled by Cys-128. The residue at position 128 (Cys-128) is a 2-(S-cysteinyl)pyruvic acid O-phosphothioketal. UDP-N-acetyl-alpha-D-glucosamine-binding residues include Asp-319 and Ile-341.

It belongs to the EPSP synthase family. MurA subfamily.

It localises to the cytoplasm. It carries out the reaction phosphoenolpyruvate + UDP-N-acetyl-alpha-D-glucosamine = UDP-N-acetyl-3-O-(1-carboxyvinyl)-alpha-D-glucosamine + phosphate. Its pathway is cell wall biogenesis; peptidoglycan biosynthesis. Cell wall formation. Adds enolpyruvyl to UDP-N-acetylglucosamine. In Prochlorococcus marinus (strain MIT 9515), this protein is UDP-N-acetylglucosamine 1-carboxyvinyltransferase.